A 434-amino-acid chain; its full sequence is Pancreatic lipase-related protein 2 (434 aa).

The cysteines at positions 4 and 10 are disulfide-linked. A required for galactolipase activity region spans residues 76–88 (IHGFTDSGENSWL). Cysteines 92 and 103 form a disulfide. Ser-154 (nucleophile) is an active-site residue. Asp-178 serves as the catalytic Charge relay system. Ca(2+)-binding residues include Glu-189, Arg-192, Asp-194, and Asp-197. A disulfide bond links Cys-239 and Cys-245. Positions 240–244 (KTGIS) are required for galactolipase activity. His-247 functions as the Charge relay system in the catalytic mechanism. Cystine bridges form between Cys-269–Cys-280 and Cys-283–Cys-288. N-linked (GlcNAc...) asparagine glycosylation occurs at Asn-318. The region spanning 322–434 (WRYKVTVTLS…ENVEQTLSPC (113 aa)) is the PLAT domain. A disulfide bridge links Cys-418 with Cys-434.

Belongs to the AB hydrolase superfamily. Lipase family. In terms of tissue distribution, pancreas.

The protein localises to the secreted. Its subcellular location is the zymogen granule membrane. It is found in the cell projection. The protein resides in the neuron projection. The catalysed reaction is a triacylglycerol + H2O = a diacylglycerol + a fatty acid + H(+). It carries out the reaction a 1,2-diacyl-3-O-(beta-D-galactosyl)-sn-glycerol + 2 H2O = 3-beta-D-galactosyl-sn-glycerol + 2 a fatty acid + 2 H(+). It catalyses the reaction 1,2,3-tri-(9Z-octadecenoyl)-glycerol + H2O = di-(9Z)-octadecenoylglycerol + (9Z)-octadecenoate + H(+). The enzyme catalyses di-(9Z)-octadecenoylglycerol + H2O = (9Z-octadecenoyl)-glycerol + (9Z)-octadecenoate + H(+). The catalysed reaction is (9Z-octadecenoyl)-glycerol + H2O = glycerol + (9Z)-octadecenoate + H(+). It carries out the reaction 1-(9Z-octadecenoyl)-glycerol + H2O = glycerol + (9Z)-octadecenoate + H(+). It catalyses the reaction 1,2,3-tripropanoylglycerol + H2O = dipropanoylglycerol + propanoate + H(+). The enzyme catalyses 1,2,3-tributanoylglycerol + H2O = dibutanoylglycerol + butanoate + H(+). The catalysed reaction is 1,2,3-trioctanoylglycerol + H2O = dioctanoylglycerol + octanoate + H(+). It carries out the reaction 1,2-didecanoylglycerol + H2O = decanoylglycerol + decanoate + H(+). It catalyses the reaction long chain 1,2-diacyl-3-O-beta-D-galactosyl-sn-glycerol + H2O = long chain acyl-3-O-beta-D-galactosyl-sn-glycerol + a fatty acid + H(+). The enzyme catalyses 1,2-dioctanoyl-3-O-beta-D-galactosyl-sn-glycerol + H2O = octanoyl-3-(beta-D-galactosyl)-sn-glycerol + octanoate + H(+). The catalysed reaction is 1,2-didodecanoyl-3-beta-D-galactosyl-sn-glycerol + H2O = dodecanoyl-3-beta-D-galactosyl-sn-glycerol + dodecanoate + H(+). It carries out the reaction 1-beta-D-galactosyl-2,3-didodecanoyl-sn-glycerol + H2O = 1-beta-D-galactosyl-dodecanoyl-sn-glycerol + dodecanoate + H(+). It catalyses the reaction a 1,2-diacyl-3-O-[alpha-D-galactosyl-(1-&gt;6)-beta-D-galactosyl]-sn-glycerol + H2O = acyl-3-O-[alpha-D-galactosyl-(1-&gt;6)-beta-D-galactosyl]-sn-glycerol + a fatty acid + H(+). The enzyme catalyses long chain 1,2-diacyl-3-O-[alpha-D-galactosyl-(1-&gt;6)-beta-D-galactosyl]-sn-glycerol + H2O = long chain acyl-3-O-[alpha-D-galactosyl-(1-&gt;6)-beta-D-galactosyl]-sn-glycerol + a fatty acid + H(+). The catalysed reaction is 1,2-dioctanoyl-3-O-[alpha-D-galactosyl-(1-&gt;6)-beta-D-galactosyl]-sn-glycerol + H2O = octanoyl-3-O-[alpha-D-galactosyl-(1-&gt;6)-beta-D-galactosyl]-sn-glycerol + octanoate + H(+). It carries out the reaction 1,2-didodecanoyl-3-O-[alpha-D-galactosyl-(1-&gt;6)-beta-D-galactosyl]-sn-glycerol + H2O = dodecanoyl-3-O-[alpha-D-galactosyl-(1-&gt;6)-beta-D-galactosyl]-sn-glycerol + dodecanoate + H(+). It catalyses the reaction a 1,2-diacyl-sn-glycero-3-phosphocholine + H2O = a monoacyl-sn-glycero-3-phosphocholine + a fatty acid + H(+). It functions in the pathway glycerolipid metabolism; triacylglycerol degradation. The protein operates within glycolipid metabolism. CLPS stimulates triacylglycerol lipase activity. Not inhibited by bile salts. Lipase that primarily hydrolyzes triglycerides and galactosylglycerides. In neonates, may play a major role in pancreatic digestion of dietary fats such as milk fat globules enriched in long-chain triglycerides. Hydrolyzes short-, medium- and long-chain fatty acyls in triglycerides without apparent positional specificity. Can completely deacylate triacylglycerols. When the liver matures and bile salt synthesis increases, likely functions mainly as a galactolipase and monoacylglycerol lipase. Hydrolyzes monogalactosyldiglycerols (MGDG) and digalactosyldiacylglycerols (DGDG) present in a plant-based diet, releasing long-chain polyunsaturated fatty acids. Hydrolyzes medium- and long-chain fatty acyls in galactolipids. May act together with LIPF to hydrolyze partially digested triglycerides. Hydrolyzes long-chain monoglycerides with high efficiency. In cytotoxic T cells, contributes to perforin-dependent cell lysis, but is unlikely to mediate direct cytotoxicity. Also has low phospholipase activity. In neurons, required for the localization of the phospholipid 1-oleoyl-2-palmitoyl-PC (OPPC) to neurite tips through acyl chain remodeling of membrane phospholipids. The resulting OPPC-rich lipid membrane domain recruits the t-SNARE protein STX4 by selectively interacting with the STX4 transmembrane domain and this promotes surface expression of the dopamine transporter SLC6A3/DAT at neurite tips by facilitating fusion of SLC6A3-containing transport vesicles with the plasma membrane. The polypeptide is Pancreatic lipase-related protein 2 (Cavia porcellus (Guinea pig)).